The following is a 124-amino-acid chain: Small ribosomal subunit protein uS13 (124 aa).

The interval 98 to 124 (VRGQRTKTNARTRKGPKRTIAGKKKAR) is disordered.

The protein belongs to the universal ribosomal protein uS13 family. As to quaternary structure, part of the 30S ribosomal subunit. Forms a loose heterodimer with protein S19. Forms two bridges to the 50S subunit in the 70S ribosome.

Located at the top of the head of the 30S subunit, it contacts several helices of the 16S rRNA. In the 70S ribosome it contacts the 23S rRNA (bridge B1a) and protein L5 of the 50S subunit (bridge B1b), connecting the 2 subunits; these bridges are implicated in subunit movement. Contacts the tRNAs in the A and P-sites. The protein is Small ribosomal subunit protein uS13 of Mycobacterium leprae (strain Br4923).